The following is a 570-amino-acid chain: D-xylulose kinase A (570 aa).

Substrate contacts are provided by H95, R166, D282, and N283. ATP-binding positions include W364, 469 to 470, and N473; that span reads GG.

It belongs to the FGGY kinase family.

The protein resides in the cytoplasm. It catalyses the reaction D-xylulose + ATP = D-xylulose 5-phosphate + ADP + H(+). Functionally, highly specific D-xylulose kinase which participates in the catabolism of xylose. Xylose is a major component of hemicelluloses such as xylan. Most fungi utilize D-xylose via three enzymatic reactions, xylose reductase (XR), xylitol dehydrogenase (XDH), and xylulokinase, to form xylulose 5-phosphate, which enters pentose phosphate pathway. The protein is D-xylulose kinase A (xkiA) of Aspergillus niger.